The sequence spans 327 residues: Glycerol-3-phosphate dehydrogenase [NAD(P)+] (327 aa).

Residues phenylalanine 13, arginine 34, and lysine 107 each coordinate NADPH. Lysine 107 and glycine 135 together coordinate sn-glycerol 3-phosphate. Position 139 (alanine 139) interacts with NADPH. Lysine 190, aspartate 243, serine 253, arginine 254, and asparagine 255 together coordinate sn-glycerol 3-phosphate. Lysine 190 functions as the Proton acceptor in the catalytic mechanism. Arginine 254 lines the NADPH pocket. NADPH is bound by residues valine 276 and glutamate 277.

The protein belongs to the NAD-dependent glycerol-3-phosphate dehydrogenase family.

It localises to the cytoplasm. It carries out the reaction sn-glycerol 3-phosphate + NAD(+) = dihydroxyacetone phosphate + NADH + H(+). The catalysed reaction is sn-glycerol 3-phosphate + NADP(+) = dihydroxyacetone phosphate + NADPH + H(+). The protein operates within membrane lipid metabolism; glycerophospholipid metabolism. In terms of biological role, catalyzes the reduction of the glycolytic intermediate dihydroxyacetone phosphate (DHAP) to sn-glycerol 3-phosphate (G3P), the key precursor for phospholipid synthesis. The polypeptide is Glycerol-3-phosphate dehydrogenase [NAD(P)+] (Rhizobium etli (strain ATCC 51251 / DSM 11541 / JCM 21823 / NBRC 15573 / CFN 42)).